Here is a 222-residue protein sequence, read N- to C-terminus: Dihydrophenazinedicarboxylate synthase (222 aa).

Ser18 provides a ligand contact to substrate. FMN-binding positions include 73-76 (RIVV) and 88-89 (ST). His90 serves as a coordination point for substrate. FMN is bound by residues 94–95 (QK) and Gln117. Arg139 and Ser147 together coordinate substrate. Residues 152–153 (QS) and Arg205 contribute to the FMN site.

Belongs to the pyridoxamine 5'-phosphate oxidase family. Requires FMN as cofactor.

It catalyses the reaction (1R,6R)-1,4,5,5a,6,9-hexahydrophenazine-1,6-dicarboxylate + O2 = (1R,10aS)-1,4,10,10a-tetrahydrophenazine-1,6-dicarboxylate + H2O2. The catalysed reaction is (1R,10aS)-1,4,10,10a-tetrahydrophenazine-1,6-dicarboxylate + O2 = (5aS)-5,5a-dihydrophenazine-1,6-dicarboxylate + H2O2. It carries out the reaction (1R,10aS)-1,4,10,10a-tetrahydrophenazine-1-carboxylate + O2 = (10aS)-10,10a-dihydrophenazine-1-carboxylate + H2O2. The enzyme catalyses (1R)-1,4,5,10-tetrahydrophenazine-1-carboxylate + O2 = (10aS)-10,10a-dihydrophenazine-1-carboxylate + H2O2. It participates in antibiotic biosynthesis; phenazine biosynthesis. Its function is as follows. Involved in the biosynthesis of the antibiotic phenazine, a nitrogen-containing heterocyclic molecule having important roles in virulence, competition and biological control. Catalyzes several oxidations in the terminal steps of core phenazine biosynthesis. It oxidizes both hexahydrophenazine-1,6-dicarboxylic acid (HHPDC) and tetrahydrophenazine-1-carboxylic acid (THPCA) and thereby contributes to the generation of both phenazine-1,6-dicarboxylic acid (PDC) and phenazine-1-carboxylic acid (PCA). The sequence is that of Dihydrophenazinedicarboxylate synthase from Pseudomonas chlororaphis (Pseudomonas aureofaciens).